A 349-amino-acid polypeptide reads, in one-letter code: Fructose-1,6-bisphosphatase class 1 (349 aa).

Glu91, Asp110, Leu112, and Asp113 together coordinate Mg(2+). Substrate is bound by residues 113–116 (DGSS) and Asn205. Position 277 (Glu277) interacts with Mg(2+).

It belongs to the FBPase class 1 family. As to quaternary structure, homotetramer. It depends on Mg(2+) as a cofactor.

The protein resides in the cytoplasm. It carries out the reaction beta-D-fructose 1,6-bisphosphate + H2O = beta-D-fructose 6-phosphate + phosphate. Its pathway is carbohydrate biosynthesis; gluconeogenesis. This is Fructose-1,6-bisphosphatase class 1 from Rhizobium meliloti (strain 1021) (Ensifer meliloti).